A 323-amino-acid polypeptide reads, in one-letter code: Galectin-4 (323 aa).

Galectin domains lie at 19–150 (YYKP…INFI) and 194–323 (YKTR…YVQI). 256–262 (WGAEERK) contributes to the a beta-D-galactoside binding site.

Monomer.

Functionally, galectin that binds lactose and a related range of sugars. May be involved in the assembly of adherens junctions. This chain is Galectin-4 (LGALS4), found in Sus scrofa (Pig).